The primary structure comprises 798 residues: Integrin beta-1 (798 aa).

An N-terminal signal peptide occupies residues 1 to 20 (MNLQPIFWIGLISSICCVFA). One can recognise a PSI domain in the interval 26 to 76 (RCLKANAKSCGECIQAGPNCGWCTNSTFLQEGMPTSARCDDLEALKKKGCP). 28 disulfide bridges follow: Cys27/Cys45, Cys35/Cys464, Cys38/Cys64, Cys48/Cys75, Cys207/Cys213, Cys261/Cys301, Cys401/Cys415, Cys435/Cys462, Cys466/Cys486, Cys477/Cys489, Cys491/Cys500, Cys502/Cys533, Cys516/Cys531, Cys525/Cys536, Cys538/Cys553, Cys555/Cys576, Cys560/Cys574, Cys568/Cys579, Cys581/Cys590, Cys592/Cys615, Cys599/Cys613, Cys607/Cys618, Cys620/Cys630, Cys633/Cys636, Cys640/Cys691, Cys646/Cys665, Cys649/Cys661, and Cys699/Cys723. Asn50 carries an N-linked (GlcNAc...) asparagine glycan. The interval 75–107 (CPPDDIENPRGSKDIKKNKNVTNRSKGTAEKLK) is disordered. Basic and acidic residues predominate over residues 81-91 (ENPRGSKDIKK). N-linked (GlcNAc...) asparagine glycans are attached at residues Asn94 and Asn97. One can recognise a VWFA domain in the interval 140–378 (DYPIDLYYLM…QLIIDAYNSL (239 aa)). 2 residues coordinate Mg(2+): Ser152 and Ser154. 4 residues coordinate Ca(2+): Ser154, Asp157, Asp158, and Glu189. A CX3CL1-binding region spans residues 207–213 (CTSEQNC). N-linked (GlcNAc...) asparagine glycosylation occurs at Asn212. The Ca(2+) site is built by Asn244, Asp246, Pro248, and Glu249. Glu249 contacts Mg(2+). N-linked (GlcNAc...) asparagine glycosylation is present at Asn269. Positions 295-314 (LPNDGQCHLENNMYTMSHYY) are CX3CL1-binding. A Ca(2+)-binding site is contributed by Ala362. N-linked (GlcNAc...) asparagine glycosylation is found at Asn363, Asn406, and Asn417. The tract at residues 383–465 (ILENSKLSEG…VILQYICECE (83 aa)) is interaction with TMEM182. 4 consecutive I-EGF domains span residues 466-501 (CQSE…RHCE), 502-554 (CSTD…KFCE), 555-591 (CDNF…SACD), and 592-631 (CSLD…QTCE). Asn481 is a glycosylation site (N-linked (GlcNAc...) asparagine). A glycan (N-linked (GlcNAc...) asparagine) is linked at Asn520. An N-linked (GlcNAc...) asparagine glycan is attached at Asn584. N-linked (GlcNAc...) asparagine glycosylation occurs at Asn669. Residues 729 to 749 (IIPIVAGVVAGIVLIGLALLL) traverse the membrane as a helical segment. Residues 762–767 (EFAKFE) form a signal for sorting from recycling endosomes; interaction with ACAP1 region. Thr777 carries the phosphothreonine modification. A Phosphotyrosine modification is found at Tyr783. Residue Ser785 is modified to Phosphoserine. Positions 785 to 792 (SAVTTVVN) are interaction with ITGB1BP1. At Thr789 the chain carries Phosphothreonine. Lys794 is modified (N6-acetyllysine; alternate). Residue Lys794 forms a Glycyl lysine isopeptide (Lys-Gly) (interchain with G-Cter in SUMO1); alternate linkage.

Belongs to the integrin beta chain family. In terms of assembly, interacts with seprase FAP (seprase); the interaction occurs at the cell surface of invadopodia membrane in a collagen-dependent manner. Heterodimer of an alpha and a beta subunit. Beta-1 associates with either alpha-1, alpha-2, alpha-3, alpha-4, alpha-5, alpha-6, alpha-7, alpha-8, alpha-9, alpha-10, alpha-11 or alpha-V. ITGA6:ITGB1 is found in a complex with CD9; interaction takes place in oocytes and is involved in sperm-egg fusion. Binds LGALS3BP and NMRK2, when associated with alpha-7, but not with alpha-5. Interacts with FLNA, FLNB, FLNC and RANBP9. Interacts with KRT1 in the presence of RACK1 and SRC. Interacts with JAML; integrin alpha-4/beta-1 may regulate leukocyte to endothelial cells adhesion by controlling JAML homodimerization. Interacts with RAB21. Interacts (via the cytoplasmic region) with RAB25 (via the hypervariable C-terminal region). Interacts with MYO10. Interacts with ITGB1BP1 (via C-terminal region); the interaction is a prerequisite for focal adhesion disassembly. Interacts with TLN1; the interaction is prevented by competitive binding of ITGB1BP1. Interacts with ACAP1; required for ITGB1 recycling. Interacts with ASAP3. Interacts with FERMT2; the interaction is inhibited in presence of ITGB1BP1. Interacts with DAB2. Interacts with FGR and HCK. Interacts with alpha-7A and alpha-7B in adult skeletal muscle. Interacts with alpha-7B in cardiomyocytes of adult heart. Interacts with EMP2; the interaction may be direct or indirect and ITGB1 has a heterodimer form. ITGA5:ITGB1 interacts with CCN3. ITGA4:ITGB1 is found in a ternary complex with CX3CR1 and CX3CL1. ITGA5:ITGB1 interacts with FBN1. ITGA5:ITGB1 acts as a receptor for fibronectin FN1 and mediates R-G-D-dependent cell adhesion to FN1. ITGA5:ITGB1 interacts with IL1B. Interacts with MDK. ITGA4:ITGB1 interacts with MDK; this interaction mediates MDK-induced osteoblast cells migration through PXN phosphorylation. ITGA6:ITGB1 interacts with MDK; this interaction mediates MDK-induced neurite-outgrowth. ITGA5:ITGB1 interacts with ACE2. Interacts with TMEM182 and LAMB1. Interacts with tensin TNS3; TNS3 also interacts with PEAK1, thus acting as an adapter molecule to bridge the association of PEAK1 with ITGB1. Interacts with tensin TNS4; the interaction displaces tensin TNS3 from the ITGB1 cytoplasmic tail and promotes ITGB1 stability. Integrin ITGA9:ITGB1 interacts with SPP1/OPN (via N-terminus). Integrin ITGA9:ITGB1 interacts with TNC/TNFN3 (via the 3rd Fibronectin type-III domain). Integrins ITGA4:ITGB1 and ITGA9:ITGB1 interact with SVEP1 (via Sushi domain 21); thereby inhibit Ca(2+) intracellular signaling and as a result repress vasocontraction. ITGA4:ITGB1 and ITGA5:ITGB1 interacts with SELP. Interacts with CD248. ITGA5:ITGB1 interacts with IGFBP1. ITGA4:ITGB1 interacts with BCAM. Interacts with ADGRG6.

It localises to the cell membrane. Its subcellular location is the cell projection. It is found in the invadopodium membrane. The protein localises to the ruffle membrane. The protein resides in the recycling endosome. It localises to the melanosome. Its subcellular location is the lamellipodium. It is found in the ruffle. The protein localises to the cell junction. The protein resides in the focal adhesion. In terms of biological role, integrins alpha-1/beta-1, alpha-2/beta-1, alpha-10/beta-1 and alpha-11/beta-1 are receptors for collagen. Integrins alpha-1/beta-1 and alpha-2/beta-2 recognize the proline-hydroxylated sequence G-F-P-G-E-R in collagen. Integrins alpha-2/beta-1, alpha-3/beta-1, alpha-4/beta-1, alpha-5/beta-1, alpha-8/beta-1, alpha-10/beta-1, alpha-11/beta-1 and alpha-V/beta-1 are receptors for fibronectin. Alpha-4/beta-1 recognizes one or more domains within the alternatively spliced CS-1 and CS-5 regions of fibronectin. Integrin alpha-5/beta-1 is a receptor for fibrinogen. Integrin alpha-1/beta-1, alpha-2/beta-1, alpha-6/beta-1 and alpha-7/beta-1 are receptors for lamimin. Integrin alpha-6/beta-1 (ITGA6:ITGB1) is present in oocytes and is involved in sperm-egg fusion. Integrin alpha-4/beta-1 is a receptor for VCAM1 and recognizes the sequence Q-I-D-S in VCAM1. Integrin alpha-9/beta-1 is a receptor for VCAM1, cytotactin and osteopontin. It recognizes the sequence A-E-I-D-G-I-E-L in cytotactin. Integrin alpha-3/beta-1 is a receptor for epiligrin, thrombospondin and CSPG4. Integrin alpha-3/beta-1 provides a docking site for FAP (seprase) at invadopodia plasma membranes in a collagen-dependent manner and hence may participate in the adhesion, formation of invadopodia and matrix degradation processes, promoting cell invasion. Alpha-3/beta-1 may mediate with LGALS3 the stimulation by CSPG4 of endothelial cells migration. Integrin alpha-V/beta-1 is a receptor for vitronectin. Beta-1 integrins recognize the sequence R-G-D in a wide array of ligands. When associated with alpha-7/beta-1 integrin, regulates cell adhesion and laminin matrix deposition. Involved in promoting endothelial cell motility and angiogenesis. Involved in osteoblast compaction through the fibronectin fibrillogenesis cell-mediated matrix assembly process and the formation of mineralized bone nodules. May be involved in up-regulation of the activity of kinases such as PKC via binding to KRT1. Together with KRT1 and RACK1, serves as a platform for SRC activation or inactivation. Plays a mechanistic adhesive role during telophase, required for the successful completion of cytokinesis. ITGA4:ITGB1 binds to fractalkine (CX3CL1) and may act as its coreceptor in CX3CR1-dependent fractalkine signaling. ITGA4:ITGB1 and ITGA5:ITGB1 bind to PLA2G2A via a site (site 2) which is distinct from the classical ligand-binding site (site 1) and this induces integrin conformational changes and enhanced ligand binding to site 1. ITGA5:ITGB1 acts as a receptor for fibrillin-1 (FBN1) and mediates R-G-D-dependent cell adhesion to FBN1. ITGA5:ITGB1 is a receptor for IL1B and binding is essential for IL1B signaling. ITGA5:ITGB3 is a receptor for soluble CD40LG and is required for CD40/CD40LG signaling. Plays an important role in myoblast differentiation and fusion during skeletal myogenesis. ITGA9:ITGB1 may play a crucial role in SVEP1/polydom-mediated myoblast cell adhesion. Integrins ITGA9:ITGB1 and ITGA4:ITGB1 repress PRKCA-mediated L-type voltage-gated channel Ca(2+) influx and ROCK-mediated calcium sensitivity in vascular smooth muscle cells via their interaction with SVEP1, thereby inhibit vasocontraction. The polypeptide is Integrin beta-1 (ITGB1) (Pongo abelii (Sumatran orangutan)).